We begin with the raw amino-acid sequence, 273 residues long: ATP synthase F(1) complex subunit gamma, mitochondrial (273 aa).

Lys14 bears the N6-acetyllysine mark. The residue at position 24 (Lys24) is an N6-succinyllysine. Residue Lys30 is modified to N6-acetyllysine. Lys90 carries the post-translational modification N6-acetyllysine; alternate. Lys90 bears the N6-succinyllysine; alternate mark. Lys113 carries the N6-acetyllysine modification. Phosphoserine is present on Ser121. Residue Lys129 is modified to N6-acetyllysine; alternate. Lys129 is modified (N6-succinyllysine; alternate). Lys172 carries the post-translational modification N6-acetyllysine. N6-succinyllysine is present on Lys245.

It belongs to the ATPase gamma chain family. As to quaternary structure, component of the ATP synthase complex composed at least of ATP5F1A/subunit alpha, ATP5F1B/subunit beta, ATP5MC1/subunit c (homooctomer), MT-ATP6/subunit a, MT-ATP8/subunit 8, ATP5ME/subunit e, ATP5MF/subunit f, ATP5MG/subunit g, ATP5MK/subunit k, ATP5MJ/subunit j, ATP5F1C/subunit gamma, ATP5F1D/subunit delta, ATP5F1E/subunit epsilon, ATP5PF/subunit F6, ATP5PB/subunit b, ATP5PD/subunit d, ATP5PO/subunit OSCP. ATP synthase complex consists of a soluble F(1) head domain (subunits alpha(3) and beta(3)) - the catalytic core - and a membrane F(0) domain - the membrane proton channel (subunits c, a, 8, e, f, g, k and j). These two domains are linked by a central stalk (subunits gamma, delta, and epsilon) rotating inside the F1 region and a stationary peripheral stalk (subunits F6, b, d, and OSCP). Interacts with FLVCR2; this interaction occurs in the absence of heme and is disrupted upon heme binding.

Its subcellular location is the mitochondrion inner membrane. Its function is as follows. Subunit gamma, of the mitochondrial membrane ATP synthase complex (F(1)F(0) ATP synthase or Complex V) that produces ATP from ADP in the presence of a proton gradient across the membrane which is generated by electron transport complexes of the respiratory chain. ATP synthase complex consist of a soluble F(1) head domain - the catalytic core - and a membrane F(1) domain - the membrane proton channel. These two domains are linked by a central stalk rotating inside the F(1) region and a stationary peripheral stalk. During catalysis, ATP synthesis in the catalytic domain of F(1) is coupled via a rotary mechanism of the central stalk subunits to proton translocation. In vivo, can only synthesize ATP although its ATP hydrolase activity can be activated artificially in vitro. With the central stalk subunit delta, is essential for the biogenesis of F(1) catalytic part of the ATP synthase complex namely in the formation of F1 assembly intermediate. The sequence is that of ATP synthase F(1) complex subunit gamma, mitochondrial from Rattus norvegicus (Rat).